A 319-amino-acid polypeptide reads, in one-letter code: D-galacturonate reductase (319 aa).

Y58 serves as the catalytic Proton donor. H121 is a binding site for substrate. 216-275 provides a ligand contact to NADP(+); it reads SPLGAARTKWGDDRVLGSDIIEEIAQAKGKSTAQISLRWVYEQGVSIVTKSYNKERMRQN.

Belongs to the aldo/keto reductase family. As to expression, expressed specifically in the receptacle tissue of the fruit.

The catalysed reaction is L-galactonate + NADP(+) = aldehydo-D-galacturonate + NADPH + H(+). It participates in cofactor biosynthesis; L-ascorbate biosynthesis. Involved in ascorbic acid (vitamin C) biosynthesis. This Fragaria ananassa (Strawberry) protein is D-galacturonate reductase (GALUR).